The chain runs to 445 residues: Phosphoglucosamine mutase (445 aa).

The active-site Phosphoserine intermediate is the S102. 4 residues coordinate Mg(2+): S102, D241, D243, and D245. Position 102 is a phosphoserine (S102).

This sequence belongs to the phosphohexose mutase family. The cofactor is Mg(2+). Activated by phosphorylation.

It catalyses the reaction alpha-D-glucosamine 1-phosphate = D-glucosamine 6-phosphate. Its function is as follows. Catalyzes the conversion of glucosamine-6-phosphate to glucosamine-1-phosphate. The sequence is that of Phosphoglucosamine mutase from Novosphingobium aromaticivorans (strain ATCC 700278 / DSM 12444 / CCUG 56034 / CIP 105152 / NBRC 16084 / F199).